A 309-amino-acid chain; its full sequence is tRNA pseudouridine synthase B (309 aa).

Residue D51 is the Nucleophile of the active site.

This sequence belongs to the pseudouridine synthase TruB family. Type 1 subfamily.

It catalyses the reaction uridine(55) in tRNA = pseudouridine(55) in tRNA. In terms of biological role, responsible for synthesis of pseudouridine from uracil-55 in the psi GC loop of transfer RNAs. In Coxiella burnetii (strain RSA 493 / Nine Mile phase I), this protein is tRNA pseudouridine synthase B.